Consider the following 425-residue polypeptide: Dihydroorotase (425 aa).

Residues His-56 and His-58 each contribute to the Zn(2+) site. Substrate is bound by residues 58–60 (HWR) and Asn-90. Zn(2+)-binding residues include Asp-147, His-174, and His-227. Asn-273 provides a ligand contact to substrate. Asp-300 is a Zn(2+) binding site. Residue Asp-300 is part of the active site. Residues His-304 and 318–319 (FG) contribute to the substrate site.

Belongs to the metallo-dependent hydrolases superfamily. DHOase family. Class I DHOase subfamily. The cofactor is Zn(2+).

The enzyme catalyses (S)-dihydroorotate + H2O = N-carbamoyl-L-aspartate + H(+). The protein operates within pyrimidine metabolism; UMP biosynthesis via de novo pathway; (S)-dihydroorotate from bicarbonate: step 3/3. Its function is as follows. Catalyzes the reversible cyclization of carbamoyl aspartate to dihydroorotate. The polypeptide is Dihydroorotase (Fusobacterium nucleatum subsp. nucleatum (strain ATCC 25586 / DSM 15643 / BCRC 10681 / CIP 101130 / JCM 8532 / KCTC 2640 / LMG 13131 / VPI 4355)).